The chain runs to 89 residues: DNA/RNA-binding protein Alba 2 (89 aa).

Belongs to the histone-like Alba family. Forms homodimers and homotetramers. Interacts with Alba 1.

Its subcellular location is the cytoplasm. The protein localises to the chromosome. Its function is as follows. Binds double-stranded DNA tightly but without sequence specificity. Involved in DNA compaction. This Archaeoglobus fulgidus (strain ATCC 49558 / DSM 4304 / JCM 9628 / NBRC 100126 / VC-16) protein is DNA/RNA-binding protein Alba 2.